Reading from the N-terminus, the 556-residue chain is Glutamine--tRNA ligase (556 aa).

A 'HIGH' region motif is present at residues 34–44; it reads PEPNGYLHIGH. Residues 35–37 and 41–47 contribute to the ATP site; these read EPN and HIGHAKS. L-glutamine is bound by residues aspartate 67 and tyrosine 212. ATP contacts are provided by residues threonine 231, 261-262, and 269-271; these read RL and MSK. The 'KMSKS' region motif lies at 268 to 272; it reads IMSKR.

It belongs to the class-I aminoacyl-tRNA synthetase family. Monomer.

The protein resides in the cytoplasm. The catalysed reaction is tRNA(Gln) + L-glutamine + ATP = L-glutaminyl-tRNA(Gln) + AMP + diphosphate. This is Glutamine--tRNA ligase from Sodalis glossinidius (strain morsitans).